A 960-amino-acid chain; its full sequence is Collagenase ColA (960 aa).

An N-terminal signal peptide occupies residues 1–30 (MNKNLRFTQMMIGISTMALSFGSIQTQVSA). Residues 31-92 (EETAPYNILQ…KRDEIQLKQS (62 aa)) constitute a propeptide that is removed on maturation. Residues 93-365 (YTLAELNKMP…AVEQMKTNYG (273 aa)) form an activator domain region. Residues 93-764 (YTLAELNKMP…VFHGVATEEK (672 aa)) form an S1 metalloprotease domain region. The tract at residues 375 to 644 (DLQKIREEGK…MQQLIDNQDK (270 aa)) is catalytic subdomain. A Zn(2+)-binding site is contributed by His500. Glu501 is a catalytic residue. 2 residues coordinate Zn(2+): His504 and Glu532. Positions 652–764 (NDYLIQHAPK…VFHGVATEEK (113 aa)) are helper subdomain. One can recognise a PKD domain in the interval 768 to 849 (TTIVNMNGPY…ESKEQTKVTV (82 aa)). The segment covering 836–845 (SRGKESKEQT) has biased composition (basic and acidic residues). The segment at 836–859 (SRGKESKEQTKVTVKQDPQTSESY) is disordered. A compositionally biased stretch (polar residues) spans 846 to 857 (KVTVKQDPQTSE). The segment at 852 to 960 (DPQTSESYEE…KNGEYSLLVK (109 aa)) is collagen-binding domain.

It belongs to the peptidase M9B family. Collagenase subfamily. Ca(2+) is required as a cofactor. The cofactor is Zn(2+).

The protein resides in the secreted. It catalyses the reaction Digestion of native collagen in the triple helical region at Xaa-|-Gly bonds. With synthetic peptides, a preference is shown for Gly at P3 and P1', Pro and Ala at P2 and P2', and hydroxyproline, Ala or Arg at P3'.. Its function is as follows. Acts as a true collagenase, which is highly active and efficiently targets native tropocollagen. In vitro, can also cleave gelatin and the synthetic peptide FALGPA (furylacryloyl-Leu-Gly-Pro-Ala). May contribute to bacterial virulence in endophthalmitis or opportunistic infections via collagen degradation in the host extracellular matrix (ECM). The polypeptide is Collagenase ColA (Bacillus cereus (strain ATCC 14579 / DSM 31 / CCUG 7414 / JCM 2152 / NBRC 15305 / NCIMB 9373 / NCTC 2599 / NRRL B-3711)).